Here is a 228-residue protein sequence, read N- to C-terminus: Ankyrin repeat domain-containing protein 46 (228 aa).

ANK repeat units follow at residues 11-40 (QTNV…DPNI), 44-73 (RGRT…DLLA), 77-103 (QGNT…KIDI), and 107-138 (QGAT…EVKG). Residues 195-215 (VLLLIFVIALLSLGIAYYVSG) traverse the membrane as a helical segment.

It is found in the membrane. This Bos taurus (Bovine) protein is Ankyrin repeat domain-containing protein 46 (ANKRD46).